The sequence spans 407 residues: Imidazolonepropionase (407 aa).

H74 and H76 together coordinate Fe(3+). Zn(2+) contacts are provided by H74 and H76. 3 residues coordinate 4-imidazolone-5-propanoate: R83, Y146, and H179. N-formimidoyl-L-glutamate is bound at residue Y146. A Fe(3+)-binding site is contributed by H244. H244 lines the Zn(2+) pocket. Q247 provides a ligand contact to 4-imidazolone-5-propanoate. D319 provides a ligand contact to Fe(3+). D319 lines the Zn(2+) pocket. Positions 321 and 323 each coordinate N-formimidoyl-L-glutamate. Residue T324 participates in 4-imidazolone-5-propanoate binding.

This sequence belongs to the metallo-dependent hydrolases superfamily. HutI family. Zn(2+) serves as cofactor. It depends on Fe(3+) as a cofactor.

Its subcellular location is the cytoplasm. It carries out the reaction 4-imidazolone-5-propanoate + H2O = N-formimidoyl-L-glutamate. The protein operates within amino-acid degradation; L-histidine degradation into L-glutamate; N-formimidoyl-L-glutamate from L-histidine: step 3/3. Catalyzes the hydrolytic cleavage of the carbon-nitrogen bond in imidazolone-5-propanoate to yield N-formimidoyl-L-glutamate. It is the third step in the universal histidine degradation pathway. The chain is Imidazolonepropionase from Salmonella paratyphi C (strain RKS4594).